The primary structure comprises 471 residues: UDP-N-acetylmuramoylalanine--D-glutamate ligase (471 aa).

120 to 126 (GSNGKTT) is a binding site for ATP.

It belongs to the MurCDEF family.

It is found in the cytoplasm. The catalysed reaction is UDP-N-acetyl-alpha-D-muramoyl-L-alanine + D-glutamate + ATP = UDP-N-acetyl-alpha-D-muramoyl-L-alanyl-D-glutamate + ADP + phosphate + H(+). Its pathway is cell wall biogenesis; peptidoglycan biosynthesis. Functionally, cell wall formation. Catalyzes the addition of glutamate to the nucleotide precursor UDP-N-acetylmuramoyl-L-alanine (UMA). The polypeptide is UDP-N-acetylmuramoylalanine--D-glutamate ligase (Nitrosomonas europaea (strain ATCC 19718 / CIP 103999 / KCTC 2705 / NBRC 14298)).